The following is a 363-amino-acid chain: Probable methyltransferase-like protein 24 (363 aa).

The N-terminal stretch at 1 to 38 (MGTAKPPGRGCGALPRWLLGAALLLGLRLCMELRHAGS) is a signal peptide. The tract at residues 37–62 (GSGPPGRRDLRGPPRTHLLPAPGPLR) is disordered.

The protein belongs to the methyltransferase superfamily.

Its subcellular location is the secreted. Probable methyltransferase. The protein is Probable methyltransferase-like protein 24 (Mettl24) of Rattus norvegicus (Rat).